A 245-amino-acid chain; its full sequence is Putative insertion sequence ATP-binding protein y4pL (245 aa).

106 to 113 (GPSGVGKS) contributes to the ATP binding site.

This sequence belongs to the IS21/IS1162 putative ATP-binding protein family.

The sequence is that of Putative insertion sequence ATP-binding protein y4pL from Sinorhizobium fredii (strain NBRC 101917 / NGR234).